A 207-amino-acid chain; its full sequence is Large ribosomal subunit protein bL25 (207 aa).

A disordered region spans residues 1–20 (MANHQIKAQRRKDEGKGASR).

It belongs to the bacterial ribosomal protein bL25 family. CTC subfamily. In terms of assembly, part of the 50S ribosomal subunit; part of the 5S rRNA/L5/L18/L25 subcomplex. Contacts the 5S rRNA. Binds to the 5S rRNA independently of L5 and L18.

Functionally, this is one of the proteins that binds to the 5S RNA in the ribosome where it forms part of the central protuberance. The sequence is that of Large ribosomal subunit protein bL25 from Xylella fastidiosa (strain M23).